A 361-amino-acid polypeptide reads, in one-letter code: sn-glycerol-3-phosphate import ATP-binding protein UgpC (361 aa).

The region spanning 4-235 (LSLKGVRKSY…PATVFVAGFI (232 aa)) is the ABC transporter domain. 37 to 44 (GPSGCGKS) is an ATP binding site.

It belongs to the ABC transporter superfamily. sn-glycerol-3-phosphate importer (TC 3.A.1.1.3) family. As to quaternary structure, the complex is composed of two ATP-binding proteins (UgpC), two transmembrane proteins (UgpA and UgpE) and a solute-binding protein (UgpB).

Its subcellular location is the cell inner membrane. The catalysed reaction is sn-glycerol 3-phosphate(out) + ATP + H2O = sn-glycerol 3-phosphate(in) + ADP + phosphate + H(+). In terms of biological role, part of the ABC transporter complex UgpBAEC involved in sn-glycerol-3-phosphate (G3P) import. Responsible for energy coupling to the transport system. The chain is sn-glycerol-3-phosphate import ATP-binding protein UgpC from Burkholderia cenocepacia (strain HI2424).